We begin with the raw amino-acid sequence, 630 residues long: MDPVAIENVTPEIECGRFPAKIVVNSKFTVTAEVFRAGHDLVYPVLMYRKLKKRWRSVAMKGTGNDLYEASFTPDEPGIYEYKISAWKDSYGTLIRNINAWLGSNEDVEQDLIEAINLIKDAYKRSSGNDKKIIKRYLDDLINSDLNKKVMILNDNNFSSIIKKYQKKIDKTDYRTLRLIADPEYGGYGSWYELFPRSIGNFNDIIKHLNYVKSMNFNVLYLTPIHPIGITNRRGKNGSRISDKNDPGSPWAIGNDSGGHYSINSDLGSLEDFKNLLRSAREKNIMIAMDIALQCSPDHPYVRDHPEWFYHRPDGSIRYAENPPKKYYDIYPLNFETKNKMALWNEMKNIFLYWISNGVKIFRVDNPHTKPLDFWEWLINDIKRDHPDVVFLSEAFTRENLMFELSKRGFTMSYTYFTWKLTKGEITEYFKKLYSYPYNFFFRPMLFTNTPDILGRDLSMGRNEFIIRSVLASTLSSLWGIYSGFELCENDRLDDTEEYLNSEKYEIKRRNFNSDNNIKDIIARLNSIRDEMPALRSGKIKFCETDNDKIIAYARYNNENKILVVLNLDTMNVQSGFIRVPLNDFSMDLNSIYDVHDVLNNNHYKWSGEYNYVRLIPGKRQAHIMVIKNA.

3 residues coordinate alpha-maltose 1-phosphate: Arg234, Gln294, and Asp329. Asp365 acts as the Nucleophile in catalysis. An alpha-maltose 1-phosphate-binding site is contributed by Asn366. The active-site Proton donor is Glu394. 504–505 serves as a coordination point for alpha-maltose 1-phosphate; the sequence is KY.

Belongs to the glycosyl hydrolase 13 family. GlgE subfamily. Homodimer.

It carries out the reaction alpha-maltose 1-phosphate + [(1-&gt;4)-alpha-D-glucosyl](n) = [(1-&gt;4)-alpha-D-glucosyl](n+2) + phosphate. Maltosyltransferase that uses maltose 1-phosphate (M1P) as the sugar donor to elongate linear or branched alpha-(1-&gt;4)-glucans. Is involved in a branched alpha-glucan biosynthetic pathway from trehalose, together with TreS, Mak and GlgB. The chain is Alpha-1,4-glucan:maltose-1-phosphate maltosyltransferase from Picrophilus torridus (strain ATCC 700027 / DSM 9790 / JCM 10055 / NBRC 100828 / KAW 2/3).